We begin with the raw amino-acid sequence, 803 residues long: Ras GTPase-activating protein 4 (803 aa).

2 C2 domains span residues 1 to 105 (MAKR…SGWA) and 116 to 232 (VQGE…EGWF). Ca(2+)-binding residues include Asp21, Asp27, Asp74, Asp76, Ser79, Asp82, Asp149, Asp155, Asp202, Asp204, Ser207, and Asp210. Residues 318–546 (GLAKDFLDLL…AQLKDFITKL (229 aa)) enclose the Ras-GAP domain. The PH domain occupies 566–673 (PPVKEGPLFI…WLSALRKVSI (108 aa)). A Btk-type zinc finger spans residues 675-711 (NTGLLGSYHPGVFRGDKWSCCHQKEKTGQGCDKTRSR). Zn(2+) is bound by residues His683, Cys694, Cys695, and Cys705. A disordered region spans residues 781-803 (EAHSSSPAGSPPSEPNCLLELQT).

Requires Ca(2+) as cofactor. In terms of tissue distribution, widely expressed.

The protein localises to the cytoplasm. It localises to the cytosol. It is found in the cell membrane. Functionally, ca(2+)-dependent Ras GTPase-activating protein, that switches off the Ras-MAPK pathway following a stimulus that elevates intracellular calcium. Functions as an adaptor for Cdc42 and Rac1 during FcR-mediated phagocytosis. This is Ras GTPase-activating protein 4 (RASA4) from Homo sapiens (Human).